The following is a 348-amino-acid chain: Ferrochelatase (348 aa).

The Fe cation site is built by histidine 218 and glutamate 299.

It belongs to the ferrochelatase family.

The protein localises to the cytoplasm. The enzyme catalyses heme b + 2 H(+) = protoporphyrin IX + Fe(2+). It functions in the pathway porphyrin-containing compound metabolism; protoheme biosynthesis; protoheme from protoporphyrin-IX: step 1/1. In terms of biological role, catalyzes the ferrous insertion into protoporphyrin IX. This is Ferrochelatase from Methylocella silvestris (strain DSM 15510 / CIP 108128 / LMG 27833 / NCIMB 13906 / BL2).